Here is a 231-residue protein sequence, read N- to C-terminus: Phosphatidylserine decarboxylase proenzyme (231 aa).

Catalysis depends on S188, which acts as the Schiff-base intermediate with substrate; via pyruvic acid. S188 bears the Pyruvic acid (Ser); by autocatalysis mark.

This sequence belongs to the phosphatidylserine decarboxylase family. PSD-A subfamily. In terms of assembly, heterodimer of a large membrane-associated beta subunit and a small pyruvoyl-containing alpha subunit. Requires pyruvate as cofactor. Is synthesized initially as an inactive proenzyme. Formation of the active enzyme involves a self-maturation process in which the active site pyruvoyl group is generated from an internal serine residue via an autocatalytic post-translational modification. Two non-identical subunits are generated from the proenzyme in this reaction, and the pyruvate is formed at the N-terminus of the alpha chain, which is derived from the carboxyl end of the proenzyme. The post-translation cleavage follows an unusual pathway, termed non-hydrolytic serinolysis, in which the side chain hydroxyl group of the serine supplies its oxygen atom to form the C-terminus of the beta chain, while the remainder of the serine residue undergoes an oxidative deamination to produce ammonia and the pyruvoyl prosthetic group on the alpha chain.

It localises to the cell membrane. It catalyses the reaction a 1,2-diacyl-sn-glycero-3-phospho-L-serine + H(+) = a 1,2-diacyl-sn-glycero-3-phosphoethanolamine + CO2. Its pathway is phospholipid metabolism; phosphatidylethanolamine biosynthesis; phosphatidylethanolamine from CDP-diacylglycerol: step 2/2. Catalyzes the formation of phosphatidylethanolamine (PtdEtn) from phosphatidylserine (PtdSer). This Rickettsia rickettsii (strain Iowa) protein is Phosphatidylserine decarboxylase proenzyme.